Reading from the N-terminus, the 67-residue chain is DNA-directed RNA polymerase subunit Rpo10 (67 aa).

Zn(2+)-binding residues include Cys7, Cys10, Cys44, and Cys45.

It belongs to the archaeal Rpo10/eukaryotic RPB10 RNA polymerase subunit family. As to quaternary structure, part of the RNA polymerase complex. Zn(2+) serves as cofactor.

Its subcellular location is the cytoplasm. It catalyses the reaction RNA(n) + a ribonucleoside 5'-triphosphate = RNA(n+1) + diphosphate. Functionally, DNA-dependent RNA polymerase (RNAP) catalyzes the transcription of DNA into RNA using the four ribonucleoside triphosphates as substrates. The polypeptide is DNA-directed RNA polymerase subunit Rpo10 (Caldivirga maquilingensis (strain ATCC 700844 / DSM 13496 / JCM 10307 / IC-167)).